Reading from the N-terminus, the 616-residue chain is Glutamine--fructose-6-phosphate aminotransferase [isomerizing] (616 aa).

C2 (nucleophile; for GATase activity) is an active-site residue. Residues 2–221 enclose the Glutamine amidotransferase type-2 domain; the sequence is CGIVGYVGTD…QDQIVTITPE (220 aa). SIS domains lie at 288–428 and 461–606; these read LGDE…VRGT and LAHW…VDQP. Catalysis depends on K611, which acts as the For Fru-6P isomerization activity.

In terms of assembly, homodimer.

It localises to the cytoplasm. The enzyme catalyses D-fructose 6-phosphate + L-glutamine = D-glucosamine 6-phosphate + L-glutamate. Its function is as follows. Catalyzes the first step in hexosamine metabolism, converting fructose-6P into glucosamine-6P using glutamine as a nitrogen source. This chain is Glutamine--fructose-6-phosphate aminotransferase [isomerizing], found in Leifsonia xyli subsp. xyli (strain CTCB07).